The chain runs to 475 residues: Aspartyl/glutamyl-tRNA(Asn/Gln) amidotransferase subunit B (475 aa).

It belongs to the GatB/GatE family. GatB subfamily. Heterotrimer of A, B and C subunits.

The enzyme catalyses L-glutamyl-tRNA(Gln) + L-glutamine + ATP + H2O = L-glutaminyl-tRNA(Gln) + L-glutamate + ADP + phosphate + H(+). It catalyses the reaction L-aspartyl-tRNA(Asn) + L-glutamine + ATP + H2O = L-asparaginyl-tRNA(Asn) + L-glutamate + ADP + phosphate + 2 H(+). Allows the formation of correctly charged Asn-tRNA(Asn) or Gln-tRNA(Gln) through the transamidation of misacylated Asp-tRNA(Asn) or Glu-tRNA(Gln) in organisms which lack either or both of asparaginyl-tRNA or glutaminyl-tRNA synthetases. The reaction takes place in the presence of glutamine and ATP through an activated phospho-Asp-tRNA(Asn) or phospho-Glu-tRNA(Gln). The polypeptide is Aspartyl/glutamyl-tRNA(Asn/Gln) amidotransferase subunit B (Hydrogenovibrio crunogenus (strain DSM 25203 / XCL-2) (Thiomicrospira crunogena)).